The sequence spans 404 residues: Formate-dependent phosphoribosylglycinamide formyltransferase (404 aa).

N(1)-(5-phospho-beta-D-ribosyl)glycinamide is bound by residues 25–26 (EL) and Glu85. Residues Arg118, Lys159, 164 to 169 (SSGKGQ), 199 to 202 (EGFV), and Glu207 contribute to the ATP site. Positions 123-318 (RLAAEELGLP…EFELHARAIL (196 aa)) constitute an ATP-grasp domain. Residues Glu277 and Glu289 each coordinate Mg(2+). N(1)-(5-phospho-beta-D-ribosyl)glycinamide contacts are provided by residues Asp296, Lys365, and 372–373 (RR).

It belongs to the PurK/PurT family. In terms of assembly, homodimer.

The enzyme catalyses N(1)-(5-phospho-beta-D-ribosyl)glycinamide + formate + ATP = N(2)-formyl-N(1)-(5-phospho-beta-D-ribosyl)glycinamide + ADP + phosphate + H(+). It participates in purine metabolism; IMP biosynthesis via de novo pathway; N(2)-formyl-N(1)-(5-phospho-D-ribosyl)glycinamide from N(1)-(5-phospho-D-ribosyl)glycinamide (formate route): step 1/1. In terms of biological role, involved in the de novo purine biosynthesis. Catalyzes the transfer of formate to 5-phospho-ribosyl-glycinamide (GAR), producing 5-phospho-ribosyl-N-formylglycinamide (FGAR). Formate is provided by PurU via hydrolysis of 10-formyl-tetrahydrofolate. In Burkholderia thailandensis (strain ATCC 700388 / DSM 13276 / CCUG 48851 / CIP 106301 / E264), this protein is Formate-dependent phosphoribosylglycinamide formyltransferase.